Here is a 126-residue protein sequence, read N- to C-terminus: Glycine cleavage system H protein (126 aa).

A Lipoyl-binding domain is found at 24 to 106 (TVTVGITDHA…YGEGWMYRIK (83 aa)). Lys65 carries the post-translational modification N6-lipoyllysine.

It belongs to the GcvH family. As to quaternary structure, the glycine cleavage system is composed of four proteins: P, T, L and H. (R)-lipoate is required as a cofactor.

Its function is as follows. The glycine cleavage system catalyzes the degradation of glycine. The H protein shuttles the methylamine group of glycine from the P protein to the T protein. This is Glycine cleavage system H protein from Psychrobacter sp. (strain PRwf-1).